The following is a 317-amino-acid chain: Transcription factor MYB35 (317 aa).

HTH myb-type domains lie at 9-65 (KSNV…RPDL) and 66-116 (KHDS…KKKL). 2 DNA-binding regions (H-T-H motif) span residues 37–61 (WSLIPKKAGLNRCGKSCRLRWTNYL) and 89–112 (WSSIARKLPGRTDNDVKNHWNTKL).

Inflorescences-specific. Accumulates in anthers, especially in tapetum and meiocytes/microsporocytes and microspores during anther development.

The protein resides in the nucleus. Its function is as follows. Required for anther development and early tapetal function during microspore maturation. Regulates callose dissolution required for microspores release from the tetrads. The protein is Transcription factor MYB35 of Arabidopsis thaliana (Mouse-ear cress).